The sequence spans 245 residues: Caffeoyl-CoA O-methyltransferase (245 aa).

Lys-19 is a binding site for substrate. S-adenosyl-L-methionine-binding positions include Thr-61, Glu-83, 85-86 (GV), Ser-91, Asp-109, and Ala-138. Substrate is bound at residue Asp-161. Asp-161 lines the a divalent metal cation pocket. Asp-163 contributes to the S-adenosyl-L-methionine binding site. A divalent metal cation is bound by residues Asp-187 and Asn-188. Asn-192 contacts substrate.

It belongs to the class I-like SAM-binding methyltransferase superfamily. Cation-dependent O-methyltransferase family. CCoAMT subfamily. Requires a divalent metal cation as cofactor.

It carries out the reaction (E)-caffeoyl-CoA + S-adenosyl-L-methionine = (E)-feruloyl-CoA + S-adenosyl-L-homocysteine + H(+). It functions in the pathway aromatic compound metabolism; phenylpropanoid biosynthesis. Methylates caffeoyl-CoA to feruloyl-CoA and 5-hydroxyferuloyl-CoA to sinapoyl-CoA. Plays a role in the synthesis of feruloylated polysaccharides. Involved in the reinforcement of the plant cell wall. Also involved in the responding to wounding or pathogen challenge by the increased formation of cell wall-bound ferulic acid polymers. The protein is Caffeoyl-CoA O-methyltransferase (CCOAOMT) of Zinnia elegans (Garden zinnia).